A 507-amino-acid chain; its full sequence is AMSH-like ubiquitin thioesterase 3 (507 aa).

Residues 73 to 107 (QERLGSRKRLRAVINELESLKPEFNQLVDKLNRVE) are a coiled coil. Disordered stretches follow at residues 133-162 (HKAS…LTSS) and 214-242 (PSNT…LNGD). Composition is skewed to polar residues over residues 146–162 (LPTS…LTSS), 214–224 (PSNTDWGSADN), and 232–242 (PSSSSASLNGD). Residues 333–463 (LHVPVRIMDD…IFHLSDPSGV (131 aa)) enclose the MPN domain. Residues histidine 411, histidine 413, aspartate 424, histidine 426, cysteine 469, histidine 475, and histidine 477 each coordinate Zn(2+). Residues 411–424 (HTHPTQTCFMSSVD) carry the JAMM motif motif.

This sequence belongs to the peptidase M67C family. Interacts with PATL1 and PATL2. May also bind to HSC70-1, HSC70-3, VHA-A, BGLU23 and EPSIN1. Interacts with BRO1/ALIX. Requires Zn(2+) as cofactor.

The protein resides in the membrane. Its subcellular location is the cytoplasm. It is found in the vacuole membrane. The protein localises to the late endosome. Its function is as follows. Zinc metalloprotease that cleaves 'Lys-48'- and 'Lys-63'-linked polyubiquitin chains, but is not implicated in protein degradation by the 26S proteasome, deneddylation, or desumoylation. Required for intracellular trafficking (e.g. trafficking from the Golgi to the vacuole and the vacuolar trafficking of endocytosed cargo), endocytosis and vacuole biogenesis. The protein is AMSH-like ubiquitin thioesterase 3 (AMSH3) of Arabidopsis thaliana (Mouse-ear cress).